The sequence spans 612 residues: FAD-linked oxidoreductase notD' (612 aa).

A signal peptide spans 1 to 19 (MRDIRELLLVLFTSCLALG). Asn50, Asn86, and Asn109 each carry an N-linked (GlcNAc...) asparagine glycan. In terms of domain architecture, FAD-binding PCMH-type spans 124-307 (GQGRIPRYSA…TSITMPVFGA (184 aa)). N-linked (GlcNAc...) asparagine glycans are attached at residues Asn311 and Asn396.

This sequence belongs to the oxygen-dependent FAD-linked oxidoreductase family. FAD is required as a cofactor.

It participates in alkaloid biosynthesis. FAD-linked oxidoreductase; part of the gene cluster that mediates the biosynthesis of notoamide, a fungal indole alkaloid that belongs to a family of natural products containing a characteristic bicyclo[2.2.2]diazaoctane core. The first step of notoamide biosynthesis involves coupling of L-proline and L-tryptophan by the bimodular NRPS notE', to produce cyclo-L-tryptophan-L-proline called brevianamide F. The reverse prenyltransferase notF' then acts as a deoxybrevianamide E synthase and converts brevianamide F to deoxybrevianamide E via reverse prenylation at C-2 of the indole ring leading to the bicyclo[2.2.2]diazaoctane core. Deoxybrevianamide E is further hydroxylated at C-6 of the indole ring, likely catalyzed by the cytochrome P450 monooxygenase notG', to yield 6-hydroxy-deoxybrevianamide E. 6-hydroxy-deoxybrevianamide E is a specific substrate of the prenyltransferase notC' for normal prenylation at C-7 to produce 6-hydroxy-7-prenyl-deoxybrevianamide, also called notoamide S. As the proposed pivotal branching point in notoamide biosynthesis, notoamide S can be diverted to notoamide E through an oxidative pyran ring closure putatively catalyzed by either notH' cytochrome P450 monooxygenase or the notD' FAD-linked oxidoreductase. This step would be followed by an indole 2,3-epoxidation-initiated pinacol-like rearrangement catalyzed by the notB' FAD-dependent monooxygenase leading to the formation of notoamide C and notoamide D. On the other hand notoamide S is converted to notoamide T by notH' (or notD'), a bifunctional oxidase that also functions as the intramolecular Diels-Alderase responsible for generation of (-)-notoamide T. To generate antipodal (+)-notoaminide T, notH (or notD) in Aspergillus strain MF297-2 is expected to catalyze a Diels-Alder reaction leading to the opposite stereochemistry. The remaining oxidoreductase notD' (or notH') likely catalyzes the oxidative pyran ring formation to yield (-)-stephacidin A. The FAD-dependent monooxygenase notI' is highly similar to notB' and is predicted to catalyze a similar conversion from (-)-stephacidin A to (+)-notoamide B via the 2,3-epoxidation of (-)-stephacidin A followed by a pinacol-type rearrangement. Finally, it remains unclear which enzyme could be responsible for the final hydroxylation steps leading to notoamide A and sclerotiamide. The chain is FAD-linked oxidoreductase notD' from Aspergillus versicolor.